A 350-amino-acid polypeptide reads, in one-letter code: Biotin synthase (350 aa).

In terms of domain architecture, Radical SAM core spans Arg-54–Ser-278. [4Fe-4S] cluster contacts are provided by Cys-69, Cys-73, and Cys-76. [2Fe-2S] cluster contacts are provided by Cys-113, Cys-144, Cys-204, and Arg-276.

The protein belongs to the radical SAM superfamily. Biotin synthase family. In terms of assembly, homodimer. It depends on [4Fe-4S] cluster as a cofactor. Requires [2Fe-2S] cluster as cofactor.

It carries out the reaction (4R,5S)-dethiobiotin + (sulfur carrier)-SH + 2 reduced [2Fe-2S]-[ferredoxin] + 2 S-adenosyl-L-methionine = (sulfur carrier)-H + biotin + 2 5'-deoxyadenosine + 2 L-methionine + 2 oxidized [2Fe-2S]-[ferredoxin]. The protein operates within cofactor biosynthesis; biotin biosynthesis; biotin from 7,8-diaminononanoate: step 2/2. In terms of biological role, catalyzes the conversion of dethiobiotin (DTB) to biotin by the insertion of a sulfur atom into dethiobiotin via a radical-based mechanism. This is Biotin synthase from Neisseria meningitidis serogroup A / serotype 4A (strain DSM 15465 / Z2491).